Consider the following 83-residue polypeptide: UPF0297 protein DSY2420 (83 aa).

Belongs to the UPF0297 family.

This Desulfitobacterium hafniense (strain Y51) protein is UPF0297 protein DSY2420.